A 243-amino-acid chain; its full sequence is MDGFDVSQAPREYQAVKPLADLFVLGMGLGWVINYVGMVYTSFKERTYGMAIMPLCCNIAWEIVYCVFHPSKSRVELGVFAMGLLINFGVMYAAIIFSSREWSHAPLVERNLPWIFCIGVLGFLTGHLALAAEIGPSLAYSWGAVVCQLLLSVGGLCQLLCRGSTRGASYTLWLSRFLGSCCTVGFASLRWMYWPQSFAWLNSPLVLWSLAVFLMVDGSYGVCFWYVEQYEKSVLMGRATKAM.

The next 7 helical transmembrane spans lie at 19–39 (LADLFVLGMGLGWVINYVGMV), 48–68 (YGMAIMPLCCNIAWEIVYCVF), 77–97 (LGVFAMGLLINFGVMYAAIIF), 112–132 (LPWIFCIGVLGFLTGHLALAA), 134–154 (IGPSLAYSWGAVVCQLLLSVG), 172–194 (LWLSRFLGSCCTVGFASLRWMYW), and 205–225 (LVLWSLAVFLMVDGSYGVCFW).

It belongs to the paxB family.

The protein resides in the membrane. The protein operates within secondary metabolite biosynthesis. Its function is as follows. Terpene cyclase; part of the gene cluster that mediates the biosynthesis of the indole diterpenes janthitremanes such as shearinine K or shearinine A. The geranylgeranyl diphosphate (GGPP) synthase janG catalyzes the first step in janthitremane biosynthesis via conversion of farnesyl pyrophosphate and isopentyl pyrophosphate into geranylgeranyl pyrophosphate (GGPP). Condensation of indole-3-glycerol phosphate with GGPP by the prenyl transferase janC then forms 3-geranylgeranylindole (3-GGI). Epoxidation by the FAD-dependent monooxygenase janM leads to a epoxidized-GGI that is substrate of the terpene cyclase janB for cyclization to yield paspaline. Paspaline is subsequently converted to 13-desoxypaspaline by the cytochrome P450 monooxygenase janP, via beta-PC-M6 in a series of alpha-face oxidations. The cytochrome P450 monooxygenase janQ is proposed to carry out sequential beta-face oxidation steps at C-7 and C-13 of 13-desoxypaspaline to form paspalicine and paspalinine respectively. The indole diterpene prenyltransferase janD may then convert paspalinine into shearinine K which is substrate of janO and/or additional enzymes for oxidation and cyclization to generate shearinine A. The protein is Terpene cyclase janB of Penicillium janthinellum (Penicillium vitale).